Consider the following 269-residue polypeptide: 4-hydroxy-tetrahydrodipicolinate reductase (269 aa).

NAD(+) is bound by residues 8 to 13 (GAAGRM) and Glu-34. Arg-35 contributes to the NADP(+) binding site. NAD(+)-binding positions include 98–100 (GTT) and 122–125 (APNY). His-155 functions as the Proton donor/acceptor in the catalytic mechanism. His-156 is a (S)-2,3,4,5-tetrahydrodipicolinate binding site. Lys-159 acts as the Proton donor in catalysis. 165–166 (GT) is a binding site for (S)-2,3,4,5-tetrahydrodipicolinate.

Belongs to the DapB family.

The protein resides in the cytoplasm. The catalysed reaction is (S)-2,3,4,5-tetrahydrodipicolinate + NAD(+) + H2O = (2S,4S)-4-hydroxy-2,3,4,5-tetrahydrodipicolinate + NADH + H(+). It carries out the reaction (S)-2,3,4,5-tetrahydrodipicolinate + NADP(+) + H2O = (2S,4S)-4-hydroxy-2,3,4,5-tetrahydrodipicolinate + NADPH + H(+). Its pathway is amino-acid biosynthesis; L-lysine biosynthesis via DAP pathway; (S)-tetrahydrodipicolinate from L-aspartate: step 4/4. Its function is as follows. Catalyzes the conversion of 4-hydroxy-tetrahydrodipicolinate (HTPA) to tetrahydrodipicolinate. The chain is 4-hydroxy-tetrahydrodipicolinate reductase from Vibrio atlanticus (strain LGP32) (Vibrio splendidus (strain Mel32)).